We begin with the raw amino-acid sequence, 110 residues long: Large ribosomal subunit protein P2C (110 aa).

Residues 83-110 form a disordered region; sequence APAAEEAAKEEAKEEEESDEDMGFGLFD. The segment covering 95 to 104 has biased composition (acidic residues); it reads KEEEESDEDM. Serine 100 carries the post-translational modification Phosphoserine.

The protein belongs to the eukaryotic ribosomal protein P1/P2 family. Component of the large ribosomal subunit (LSU). Mature yeast ribosomes consist of a small (40S) and a large (60S) subunit. The 40S small subunit contains 1 molecule of ribosomal RNA (18S rRNA) and at least 33 different proteins. The large 60S subunit contains 3 rRNA molecules (25S, 5.8S and 5S rRNA) and at least 46 different proteins. The acidic ribosomal P-proteins form the stalk structure of the 60S subunit. They are organized as a pentameric complex in which uL10/P0 interacts with 2 heterodimers of P1 and P2 proteins.

Its subcellular location is the cytoplasm. Component of the ribosome, a large ribonucleoprotein complex responsible for the synthesis of proteins in the cell. The small ribosomal subunit (SSU) binds messenger RNAs (mRNAs) and translates the encoded message by selecting cognate aminoacyl-transfer RNA (tRNA) molecules. The large subunit (LSU) contains the ribosomal catalytic site termed the peptidyl transferase center (PTC), which catalyzes the formation of peptide bonds, thereby polymerizing the amino acids delivered by tRNAs into a polypeptide chain. The nascent polypeptides leave the ribosome through a tunnel in the LSU and interact with protein factors that function in enzymatic processing, targeting, and the membrane insertion of nascent chains at the exit of the ribosomal tunnel. In Schizosaccharomyces pombe (strain 972 / ATCC 24843) (Fission yeast), this protein is Large ribosomal subunit protein P2C (rpp203).